Reading from the N-terminus, the 354-residue chain is Probable L-ascorbate-6-phosphate lactonase UlaG (354 aa).

This sequence belongs to the UlaG family. A divalent metal cation serves as cofactor.

It is found in the cytoplasm. The enzyme catalyses L-ascorbate 6-phosphate + H2O = 3-dehydro-L-gulonate 6-phosphate. It participates in cofactor degradation; L-ascorbate degradation; D-xylulose 5-phosphate from L-ascorbate: step 1/4. Probably catalyzes the hydrolysis of L-ascorbate-6-P into 3-keto-L-gulonate-6-P. Is essential for L-ascorbate utilization under anaerobic conditions. This is Probable L-ascorbate-6-phosphate lactonase UlaG from Escherichia coli O45:K1 (strain S88 / ExPEC).